The primary structure comprises 844 residues: Proto-oncogene vav (844 aa).

Residues 1–119 (MELWRQCTHW…YTLSALSWTP (119 aa)) form the Calponin-homology (CH) domain. Residues 193 to 372 (KRCCCLREIQ…RDLAQCVNEV (180 aa)) enclose the DH domain. The 103-residue stretch at 401 to 503 (RPKIDGELKI…WMEQFEMAIS (103 aa)) folds into the PH domain. A Phorbol-ester/DAG-type zinc finger spans residues 514–563 (GHDFQMFSFEETTSCKACQMLLRGTFYQGYRCQRCRAPAHKECLGRVPPC). The tract at residues 567 to 589 (GQDYSGTMKKDKPHRRAQDKKRN) is disordered. Positions 591–659 (LGLPKMEVCQ…PCNRVKPYVH (69 aa)) constitute an SH3 1 domain. Positions 670–764 (WYAGPMERAG…SLDTTLQFPF (95 aa)) constitute an SH2 domain. The region spanning 781-841 (KIFGTAKARY…PSNYVEEDYS (61 aa)) is the SH3 2 domain. Residues Tyr-825 and Tyr-843 each carry the phosphotyrosine modification.

As to quaternary structure, interacts with SHB. Interacts with APS, DOCK2, GRB2, GRB3, DOCK2, SLA, TEC and ZNF655/VIK. Interacts with SIAH2; without leading to its degradation. Associates with BLNK, PLCG1, GRB2 and NCK1 in a B-cell antigen receptor-dependent fashion. Interacts with CBLB; which inhibits tyrosine phosphorylation and down-regulates activity. May interact with CCPG1. Interacts with CLNK. Interacts with THEMIS2. Interacts with NEK3 and this interaction is prolactin-dependent. Interacts with ITK. Interacts with PTK2B/PYK2. Interacts with HCK. Interacts with PTK2B/PYK2. Interacts (via SH2 domain) with SYK. Interacts with ANKRD54. Interacts with CD6. Interacts with LCP2; this interaction plays a role in TCR-mediated cytokine production. Post-translationally, phosphorylated by FYN. Phosphorylated on tyrosine residues by HCK in response to IFNG and bacterial lipopolysaccharide (LPS).

In terms of biological role, couples tyrosine kinase signals with the activation of the Rho/Rac GTPases, thus leading to cell differentiation and/or proliferation. The polypeptide is Proto-oncogene vav (VAV1) (Bos taurus (Bovine)).